A 278-amino-acid polypeptide reads, in one-letter code: HTH-type transcriptional activator RhaS (278 aa).

In terms of domain architecture, HTH araC/xylS-type spans 174 to 272; the sequence is NQLLAWLEDH…DWSPRDIRQG (99 aa). 2 DNA-binding regions (H-T-H motif) span residues 191–212 and 239–262; these read ESIA…KQQT and VTDI…RREF.

As to quaternary structure, binds DNA as a dimer.

The protein resides in the cytoplasm. In terms of biological role, activates expression of the rhaBAD and rhaT operons. The protein is HTH-type transcriptional activator RhaS of Citrobacter koseri (strain ATCC BAA-895 / CDC 4225-83 / SGSC4696).